The following is a 576-amino-acid chain: Proline--tRNA ligase (576 aa).

Belongs to the class-II aminoacyl-tRNA synthetase family. ProS type 1 subfamily. As to quaternary structure, homodimer.

It localises to the cytoplasm. The enzyme catalyses tRNA(Pro) + L-proline + ATP = L-prolyl-tRNA(Pro) + AMP + diphosphate. Functionally, catalyzes the attachment of proline to tRNA(Pro) in a two-step reaction: proline is first activated by ATP to form Pro-AMP and then transferred to the acceptor end of tRNA(Pro). As ProRS can inadvertently accommodate and process non-cognate amino acids such as alanine and cysteine, to avoid such errors it has two additional distinct editing activities against alanine. One activity is designated as 'pretransfer' editing and involves the tRNA(Pro)-independent hydrolysis of activated Ala-AMP. The other activity is designated 'posttransfer' editing and involves deacylation of mischarged Ala-tRNA(Pro). The misacylated Cys-tRNA(Pro) is not edited by ProRS. The polypeptide is Proline--tRNA ligase (Magnetococcus marinus (strain ATCC BAA-1437 / JCM 17883 / MC-1)).